A 598-amino-acid polypeptide reads, in one-letter code: Peroxisomal targeting signal receptor (598 aa).

Disordered regions lie at residues 1-54 (MSFM…GEMS), 135-154 (RGGS…MQGG), and 208-237 (AVGK…TTTE). Residues 9–22 (ECSTGRNPLSQFTK) show a composition bias toward polar residues. Cys-10 participates in a covalent cross-link: Glycyl cysteine thioester (Cys-Gly) (interchain with G-Cter in ubiquitin). Lys-22 participates in a covalent cross-link: Glycyl lysine isopeptide (Lys-Gly) (interchain with G-Cter in ubiquitin). Over residues 23–35 (HTAEDRSLQHDRV) the composition is skewed to basic and acidic residues. Over residues 220-233 (AETATATETVTETE) the composition is skewed to low complexity. TPR repeat units follow at residues 304 to 337 (PDPF…NTEH), 338 to 371 (AEAW…EPGN), 372 to 409 (LSAL…VVDQ), 410 to 447 (ARNQ…ANID), 448 to 481 (ADVQ…RPDD), 482 to 515 (ALLW…RPSF), and 516 to 549 (VRAR…HKVE).

It belongs to the peroxisomal targeting signal receptor family. Post-translationally, ubiquitination at Cys-10 is UBC4-independent but requires the presence of PEX4. Ubiquitination at Lys-22 is UBC4-dependent.

The protein resides in the cytoplasm. It is found in the peroxisome membrane. Functionally, binds to the C-terminal PTS1-type tripeptide peroxisomal targeting signal (SKL-type) and plays an essential role in peroxisomal protein import. This is Peroxisomal targeting signal receptor (PAY32) from Yarrowia lipolytica (strain CLIB 122 / E 150) (Yeast).